The sequence spans 313 residues: RHOMBOID-like protein 7 (313 aa).

Positions 1–11 (MLSTAAEEDPE) are enriched in acidic residues. Residues 1 to 24 (MLSTAAEEDPEGGSRETNNGGETT) are disordered. Over residues 15 to 24 (RETNNGGETT) the composition is skewed to polar residues. 7 helical membrane-spanning segments follow: residues 31 to 51 (SWIIPIVVIANVVVFVVVMYY), 112 to 132 (WLHAGVIHLLANMCCVAYIGV), 143 to 163 (VGTIYLVSGFCGSILSCLFLE), 166 to 186 (ISVGASSALFGLLGAMLSELL), 196 to 216 (GVAIVMLLVIVGVNLGLGTLP), 221 to 241 (FAHIGGFFGGFLLGFLLLIHP), and 269 to 289 (LCIVASIVFVAGFTSGLVILF). The active-site Nucleophile is serine 171. Histidine 223 functions as the Charge relay system in the catalytic mechanism.

Belongs to the peptidase S54 family.

The protein resides in the membrane. It catalyses the reaction Cleaves type-1 transmembrane domains using a catalytic dyad composed of serine and histidine that are contributed by different transmembrane domains.. Functionally, probable rhomboid-type serine protease that catalyzes intramembrane proteolysis. May function in embryo development. The sequence is that of RHOMBOID-like protein 7 from Arabidopsis thaliana (Mouse-ear cress).